We begin with the raw amino-acid sequence, 784 residues long: Transcription factor E4F1 (784 aa).

The required for ubiquitin ligase activity stretch occupies residues 41–85 (GFLGLPAPFSEEDEDDVHRCGRCQAEFTALEDFVQHKIQKACQRA). Serine 50 is modified (phosphoserine). Positions 184-263 (LLVNKDGRYV…GKSFRESGAL (80 aa)) are mediates dimerization, DNA-binding, transcription repression of CCNA2 and interaction with HMGA2. 2 C2H2-type zinc fingers span residues 192–214 (YVCA…MVTH) and 220–242 (HECK…HRRH). The C2H2-type 3; degenerate zinc finger occupies 248-272 (YKCSKCGKSFRESGALTRHLKSLTP). A mediates interaction with CDKN2A region spans residues 369 to 566 (NLLHQAMQNS…REKGSLVRHV (198 aa)). 5 consecutive C2H2-type zinc fingers follow at residues 435–457 (HPCP…KRGH), 463–485 (FACA…QEVH), 491–513 (FRCG…RRVH), 519–541 (YPCP…FRTH), and 547–569 (HVCQ…VRHH). Positions 435 to 599 (HPCPQCSETF…LNRHLRTKGG (165 aa)) are interaction with BMI1. The segment at 521 to 580 (CPKCGKRYKTKNAQQVHFRTHLEEKPHVCQFCSRGFREKGSLVRHVRHHTGEKPFKCYKC) is mediates interaction with TP53. The segment at 575-597 (FKCYKCGRGFAEHGTLNRHLRTK) adopts a C2H2-type 9; degenerate zinc-finger fold. Residues 575 to 597 (FKCYKCGRGFAEHGTLNRHLRTK) form a mediates interaction with RASSF1 region.

Homodimer; binds DNA as a dimer. Forms a complex with CDKN2A and TP53. Interactions with TP53, RB1, ANP32A, BMI1 and FHL2 regulate E4F1 activity. Interacts with HDAC1, HMGA2 and RASSF1. As to quaternary structure, (Microbial infection) Interacts with HBV protein X. Post-translationally, proteolytic cleavage produces a 50 kDa N-terminal peptide (p50E4F) which has a DNA-binding activity and activates transcription in presence of the adenoviral E1A protein. The major full-length protein (p120E4F) functions as a repressor of transcription. In terms of processing, phosphorylated; p120E4F and p50E4F are both phosphorylated. Phosphorylation is cell cycle-dependent and differentially regulates DNA-binding activity and function of both forms. May be sumoylated by UBE2I upon interaction with CDKN2A. As to expression, ubiquitously expressed.

The protein resides in the nucleus. The protein localises to the nucleoplasm. It localises to the cytoplasm. It carries out the reaction S-ubiquitinyl-[E2 ubiquitin-conjugating enzyme]-L-cysteine + [acceptor protein]-L-lysine = [E2 ubiquitin-conjugating enzyme]-L-cysteine + N(6)-ubiquitinyl-[acceptor protein]-L-lysine.. Its pathway is protein modification; protein ubiquitination. In terms of biological role, may function as a transcriptional repressor. May also function as a ubiquitin ligase mediating ubiquitination of chromatin-associated TP53. Functions in cell survival and proliferation through control of the cell cycle. Functions in the p53 and pRB tumor suppressor pathways and regulates the cyclin CCNA2 transcription. Functionally, identified as a cellular target of the adenoviral oncoprotein E1A, it is required for both transcriptional activation and repression of viral genes. This Homo sapiens (Human) protein is Transcription factor E4F1 (E4F1).